Reading from the N-terminus, the 263-residue chain is Endonuclease 8 (263 aa).

Pro-2 functions as the Schiff-base intermediate with DNA in the catalytic mechanism. Glu-3 functions as the Proton donor in the catalytic mechanism. The active-site Proton donor; for beta-elimination activity is Lys-53. DNA contacts are provided by Gln-70, Arg-125, and Asn-169. The FPG-type zinc finger occupies 229-263 (KVFHRDGEPCERCGSIIEKTTLSSRPFYWCPGCQH). The active-site Proton donor; for delta-elimination activity is Arg-253.

The protein belongs to the FPG family. Requires Zn(2+) as cofactor.

It catalyses the reaction 2'-deoxyribonucleotide-(2'-deoxyribose 5'-phosphate)-2'-deoxyribonucleotide-DNA = a 3'-end 2'-deoxyribonucleotide-(2,3-dehydro-2,3-deoxyribose 5'-phosphate)-DNA + a 5'-end 5'-phospho-2'-deoxyribonucleoside-DNA + H(+). In terms of biological role, involved in base excision repair of DNA damaged by oxidation or by mutagenic agents. Acts as a DNA glycosylase that recognizes and removes damaged bases. Has a preference for oxidized pyrimidines, such as thymine glycol, 5,6-dihydrouracil and 5,6-dihydrothymine. Has AP (apurinic/apyrimidinic) lyase activity and introduces nicks in the DNA strand. Cleaves the DNA backbone by beta-delta elimination to generate a single-strand break at the site of the removed base with both 3'- and 5'-phosphates. In Escherichia coli O17:K52:H18 (strain UMN026 / ExPEC), this protein is Endonuclease 8.